Reading from the N-terminus, the 596-residue chain is Elongation factor 4 (596 aa).

The 183-residue stretch at 2 to 184 folds into the tr-type G domain; the sequence is DHIRNFSIIA…AVVARIPPPK (183 aa). GTP-binding positions include 14–19 and 131–134; these read DHGKST and NKID.

It belongs to the TRAFAC class translation factor GTPase superfamily. Classic translation factor GTPase family. LepA subfamily.

Its subcellular location is the cell inner membrane. The enzyme catalyses GTP + H2O = GDP + phosphate + H(+). Required for accurate and efficient protein synthesis under certain stress conditions. May act as a fidelity factor of the translation reaction, by catalyzing a one-codon backward translocation of tRNAs on improperly translocated ribosomes. Back-translocation proceeds from a post-translocation (POST) complex to a pre-translocation (PRE) complex, thus giving elongation factor G a second chance to translocate the tRNAs correctly. Binds to ribosomes in a GTP-dependent manner. This Dechloromonas aromatica (strain RCB) protein is Elongation factor 4.